The sequence spans 39 residues: Photosystem II reaction center protein J (39 aa).

Residues 9–29 (LWLVGLVGGFAVITIVSLFIY) traverse the membrane as a helical segment.

It belongs to the PsbJ family. PSII is composed of 1 copy each of membrane proteins PsbA, PsbB, PsbC, PsbD, PsbE, PsbF, PsbH, PsbI, PsbJ, PsbK, PsbL, PsbM, PsbT, PsbX, PsbY, PsbZ, Psb30/Ycf12, at least 3 peripheral proteins of the oxygen-evolving complex and a large number of cofactors. It forms dimeric complexes.

It is found in the plastid. The protein resides in the chloroplast thylakoid membrane. In terms of biological role, one of the components of the core complex of photosystem II (PSII). PSII is a light-driven water:plastoquinone oxidoreductase that uses light energy to abstract electrons from H(2)O, generating O(2) and a proton gradient subsequently used for ATP formation. It consists of a core antenna complex that captures photons, and an electron transfer chain that converts photonic excitation into a charge separation. The polypeptide is Photosystem II reaction center protein J (Thalassiosira pseudonana (Marine diatom)).